The following is a 138-amino-acid chain: MAEKLKVELVTPYKRVLSEEVDEITATGALGEFGVLPGHAPFLTSLKIGELAYKKDGVQQHMALNWGYFEVEGDKVTVLVETAERADEIDLERAKAALGRAEEALKKLSPEDKSFRIYEAALERAAIRMQVAAKAARK.

This sequence belongs to the ATPase epsilon chain family. In terms of assembly, F-type ATPases have 2 components, CF(1) - the catalytic core - and CF(0) - the membrane proton channel. CF(1) has five subunits: alpha(3), beta(3), gamma(1), delta(1), epsilon(1). CF(0) has three main subunits: a, b and c.

Its subcellular location is the cell inner membrane. Functionally, produces ATP from ADP in the presence of a proton gradient across the membrane. This Geotalea uraniireducens (strain Rf4) (Geobacter uraniireducens) protein is ATP synthase epsilon chain.